A 284-amino-acid polypeptide reads, in one-letter code: MGEIIDGKKLAKEIQEKVTSEVAELVKQGKKPGLAVVLVGDNQASRTYVRNKQKRTEEAGMKSVLIELPETVTEEKLLKVVEELNEDNTIHGILVQLPLPKHISEEKVIDAISFDKDVDGFHPVNVGNLFIGKDSFVPCTPAGIIELIKSTGTQIEGKRAVVIGRSNIVGKPVAQLLLNENATVTIAHSRTKDLPQVAKEADILVVATGLAKFVKKEYIKPGAIVIDVGMDRDENNKLCGDVDFDDVKEQAGFITPVPGGVGPMTITMLLANTLKAAKRIWKMN.

NADP(+) contacts are provided by residues 164 to 166 (GRS) and serine 189.

It belongs to the tetrahydrofolate dehydrogenase/cyclohydrolase family. As to quaternary structure, homodimer.

It catalyses the reaction (6R)-5,10-methylene-5,6,7,8-tetrahydrofolate + NADP(+) = (6R)-5,10-methenyltetrahydrofolate + NADPH. It carries out the reaction (6R)-5,10-methenyltetrahydrofolate + H2O = (6R)-10-formyltetrahydrofolate + H(+). It functions in the pathway one-carbon metabolism; tetrahydrofolate interconversion. Functionally, catalyzes the oxidation of 5,10-methylenetetrahydrofolate to 5,10-methenyltetrahydrofolate and then the hydrolysis of 5,10-methenyltetrahydrofolate to 10-formyltetrahydrofolate. The sequence is that of Bifunctional protein FolD from Listeria innocua serovar 6a (strain ATCC BAA-680 / CLIP 11262).